A 538-amino-acid chain; its full sequence is Beta-1,4-mannosyl-glycoprotein 4-beta-N-acetylglucosaminyltransferase (538 aa).

The Cytoplasmic portion of the chain corresponds to Met-1–Lys-7. Residues Leu-8–Leu-23 traverse the membrane as a helical; Signal-anchor for type II membrane protein segment. The Lumenal portion of the chain corresponds to His-24–Gly-538. The segment at Pro-120–Glu-161 is disordered. Residues Asn-245, Asn-263, and Asn-401 are each glycosylated (N-linked (GlcNAc...) asparagine). The disordered stretch occupies residues Arg-507 to Gly-538.

This sequence belongs to the glycosyltransferase 17 family. As to quaternary structure, interacts with MGAT4D. As to expression, highly expressed in brain and kidney and to a much lesser extent in stomach, heart, intestine, uterus, testis, ovary and lung. Not present in spleen, liver and muscle. In brain, expressed in neurons of hippocampus.

The protein resides in the golgi apparatus membrane. The enzyme catalyses N(4)-{beta-D-GlcNAc-(1-&gt;2)-alpha-D-Man-(1-&gt;3)-[beta-D-GlcNAc-(1-&gt;2)-alpha-D-Man-(1-&gt;6)]-beta-D-Man-(1-&gt;4)-beta-D-GlcNAc-(1-&gt;4)-beta-D-GlcNAc}-L-asparaginyl-[protein] + UDP-N-acetyl-alpha-D-glucosamine = N(4)-{beta-D-GlcNAc-(1-&gt;2)-alpha-D-Man-(1-&gt;3)-[beta-D-GlcNAc-(1-&gt;4)]-[beta-D-GlcNAc-(1-&gt;2)-alpha-D-Man-(1-&gt;6)]-beta-D-Man-(1-&gt;4)-beta-D-GlcNAc-(1-&gt;4)-beta-D-GlcNAc}-L-asparaginyl-[protein] + UDP + H(+). It participates in protein modification; protein glycosylation. In terms of biological role, it is involved in the regulation of the biosynthesis and biological function of glycoprotein oligosaccharides. Catalyzes the addition of N-acetylglucosamine in beta 1-4 linkage to the beta-linked mannose of the trimannosyl core of N-linked sugar chains, called bisecting N-acetylglucosamine (GlcNAc). It is one of the most important enzymes involved in the regulation of the biosynthesis of glycoprotein oligosaccharides. The addition of this bisecting GlcNAc residue alters not only the composition, but also the conformation of the N-glycan. The introduction of the bisecting GlcNAc residue results in the suppression of further processing and elongation of N-glycans, precluding the formation of beta-1,6 GlcNAc branching, catalyzed by MGAT5 since it is unable to use the bisected oligosaccharide as a substrate. Addition of bisecting N-acetylglucosamine to CDH1/E-cadherin modulates CDH1 cell membrane location. Inhibits NeuAc-alpha-2,3-Gal-beta-1,4-GlcNAc- formation which modulates sialylation levels and plays a role in cell migration regulation. In brain, addition of bisecting N-acetylglucosamine to BACE1 blocks its lysosomal targeting in response to oxidative stress and further degradation which increases its location to early endosome and the APP cleavage. The sequence is that of Beta-1,4-mannosyl-glycoprotein 4-beta-N-acetylglucosaminyltransferase from Mus musculus (Mouse).